A 450-amino-acid chain; its full sequence is Glucose-6-phosphate isomerase (450 aa).

Residue Glu-291 is the Proton donor of the active site. Catalysis depends on residues His-312 and Lys-426.

This sequence belongs to the GPI family.

The protein localises to the cytoplasm. It carries out the reaction alpha-D-glucose 6-phosphate = beta-D-fructose 6-phosphate. It functions in the pathway carbohydrate biosynthesis; gluconeogenesis. It participates in carbohydrate degradation; glycolysis; D-glyceraldehyde 3-phosphate and glycerone phosphate from D-glucose: step 2/4. Catalyzes the reversible isomerization of glucose-6-phosphate to fructose-6-phosphate. This Clostridium botulinum (strain Loch Maree / Type A3) protein is Glucose-6-phosphate isomerase.